The primary structure comprises 809 residues: Zinc finger CCCH domain-containing protein 24 (809 aa).

N-acetylmethionine is present on M1. The disordered stretch occupies residues M1–T74. Residues E30–D46 are compositionally biased toward polar residues. Residues V51–N65 are compositionally biased toward basic and acidic residues. The segment at W79–A107 adopts a C3H1-type zinc-finger fold. S-adenosyl-L-methionine contacts are provided by Q536 and E586. Positions E652–K693 are disordered. Basic and acidic residues predominate over residues N678–T692. D704 provides a ligand contact to S-adenosyl-L-methionine. The active-site Nucleophile is the C732.

This sequence belongs to the class I-like SAM-binding methyltransferase superfamily. RNA M5U methyltransferase family.

The polypeptide is Zinc finger CCCH domain-containing protein 24 (Arabidopsis thaliana (Mouse-ear cress)).